We begin with the raw amino-acid sequence, 332 residues long: Mitoferrin-1 (332 aa).

3 Solcar repeats span residues 31–119 (ASLG…IKRS), 129–213 (NSHI…MQEH), and 220–314 (YRPE…FKYF). Transmembrane regions (helical) follow at residues 33 to 52 (LGTH…TVMY), 94 to 113 (GLNI…FACY), 131 to 150 (HIAN…AVMN), 188 to 207 (SYST…FITY), 222 to 241 (PETH…AVTT), and 289 to 308 (GIQA…WSVY).

The protein belongs to the mitochondrial carrier (TC 2.A.29) family. As to expression, highly expressed in hematopoietic organs, Expressed in the intermediate cell mass (ICM), a tissue equivalent to the mammalian extraembryonic yolk-sac blood islands. Colocalizes with gata1.

The protein resides in the mitochondrion inner membrane. The catalysed reaction is Fe(2+)(in) = Fe(2+)(out). Its function is as follows. Mitochondrial iron transporter that specifically mediates iron uptake in developing erythroid cells, thereby playing an essential role in heme biosynthesis. This chain is Mitoferrin-1 (slc25a37), found in Danio rerio (Zebrafish).